A 232-amino-acid chain; its full sequence is Phosphatidylserine decarboxylase proenzyme (232 aa).

The active-site Schiff-base intermediate with substrate; via pyruvic acid is the Ser-190. Ser-190 bears the Pyruvic acid (Ser); by autocatalysis mark.

This sequence belongs to the phosphatidylserine decarboxylase family. PSD-A subfamily. Heterodimer of a large membrane-associated beta subunit and a small pyruvoyl-containing alpha subunit. Pyruvate is required as a cofactor. Post-translationally, is synthesized initially as an inactive proenzyme. Formation of the active enzyme involves a self-maturation process in which the active site pyruvoyl group is generated from an internal serine residue via an autocatalytic post-translational modification. Two non-identical subunits are generated from the proenzyme in this reaction, and the pyruvate is formed at the N-terminus of the alpha chain, which is derived from the carboxyl end of the proenzyme. The post-translation cleavage follows an unusual pathway, termed non-hydrolytic serinolysis, in which the side chain hydroxyl group of the serine supplies its oxygen atom to form the C-terminus of the beta chain, while the remainder of the serine residue undergoes an oxidative deamination to produce ammonia and the pyruvoyl prosthetic group on the alpha chain.

It is found in the cell membrane. The enzyme catalyses a 1,2-diacyl-sn-glycero-3-phospho-L-serine + H(+) = a 1,2-diacyl-sn-glycero-3-phosphoethanolamine + CO2. It participates in phospholipid metabolism; phosphatidylethanolamine biosynthesis; phosphatidylethanolamine from CDP-diacylglycerol: step 2/2. Functionally, catalyzes the formation of phosphatidylethanolamine (PtdEtn) from phosphatidylserine (PtdSer). The polypeptide is Phosphatidylserine decarboxylase proenzyme (Brucella canis (strain ATCC 23365 / NCTC 10854 / RM-666)).